The following is a 382-amino-acid chain: Chaperone protein DnaJ (382 aa).

One can recognise a J domain in the interval 4 to 69 (DYYEVLGVSR…DKRRRYDQFG (66 aa)). The segment at 138–219 (GVEKTIKIKK…CYGEGIKQGE (82 aa)) adopts a CR-type zinc-finger fold. The Zn(2+) site is built by cysteine 151, cysteine 154, cysteine 167, cysteine 170, cysteine 193, cysteine 196, cysteine 207, and cysteine 210. CXXCXGXG motif repeat units lie at residues 151 to 158 (CKECNGSG), 167 to 174 (CPTCHGAG), 193 to 200 (CPTCGGEG), and 207 to 214 (CPSCYGEG).

It belongs to the DnaJ family. As to quaternary structure, homodimer. The cofactor is Zn(2+).

The protein localises to the cytoplasm. In terms of biological role, participates actively in the response to hyperosmotic and heat shock by preventing the aggregation of stress-denatured proteins and by disaggregating proteins, also in an autonomous, DnaK-independent fashion. Unfolded proteins bind initially to DnaJ; upon interaction with the DnaJ-bound protein, DnaK hydrolyzes its bound ATP, resulting in the formation of a stable complex. GrpE releases ADP from DnaK; ATP binding to DnaK triggers the release of the substrate protein, thus completing the reaction cycle. Several rounds of ATP-dependent interactions between DnaJ, DnaK and GrpE are required for fully efficient folding. Also involved, together with DnaK and GrpE, in the DNA replication of plasmids through activation of initiation proteins. This chain is Chaperone protein DnaJ, found in Chlorobium luteolum (strain DSM 273 / BCRC 81028 / 2530) (Pelodictyon luteolum).